The primary structure comprises 334 residues: Beta-ketoacyl-[acyl-carrier-protein] synthase III (334 aa).

Active-site residues include Cys-116 and His-256. The ACP-binding stretch occupies residues Gln-257 to Arg-261. The active site involves Asn-286.

Belongs to the thiolase-like superfamily. FabH family. As to quaternary structure, homodimer.

It localises to the cytoplasm. It catalyses the reaction malonyl-[ACP] + acetyl-CoA + H(+) = 3-oxobutanoyl-[ACP] + CO2 + CoA. It participates in lipid metabolism; fatty acid biosynthesis. In terms of biological role, catalyzes the condensation reaction of fatty acid synthesis by the addition to an acyl acceptor of two carbons from malonyl-ACP. Catalyzes the first condensation reaction which initiates fatty acid synthesis and may therefore play a role in governing the total rate of fatty acid production. Possesses both acetoacetyl-ACP synthase and acetyl transacylase activities. Its substrate specificity determines the biosynthesis of branched-chain and/or straight-chain of fatty acids. The polypeptide is Beta-ketoacyl-[acyl-carrier-protein] synthase III (Phocaeicola vulgatus (strain ATCC 8482 / DSM 1447 / JCM 5826 / CCUG 4940 / NBRC 14291 / NCTC 11154) (Bacteroides vulgatus)).